The chain runs to 211 residues: Small ribosomal subunit protein eS1 (211 aa).

It belongs to the eukaryotic ribosomal protein eS1 family.

This chain is Small ribosomal subunit protein eS1, found in Archaeoglobus fulgidus (strain ATCC 49558 / DSM 4304 / JCM 9628 / NBRC 100126 / VC-16).